Reading from the N-terminus, the 250-residue chain is 3-deoxy-manno-octulosonate cytidylyltransferase (250 aa).

Belongs to the KdsB family.

It localises to the cytoplasm. The enzyme catalyses 3-deoxy-alpha-D-manno-oct-2-ulosonate + CTP = CMP-3-deoxy-beta-D-manno-octulosonate + diphosphate. It participates in nucleotide-sugar biosynthesis; CMP-3-deoxy-D-manno-octulosonate biosynthesis; CMP-3-deoxy-D-manno-octulosonate from 3-deoxy-D-manno-octulosonate and CTP: step 1/1. Its pathway is bacterial outer membrane biogenesis; lipopolysaccharide biosynthesis. Functionally, activates KDO (a required 8-carbon sugar) for incorporation into bacterial lipopolysaccharide in Gram-negative bacteria. The polypeptide is 3-deoxy-manno-octulosonate cytidylyltransferase (Thioalkalivibrio sulfidiphilus (strain HL-EbGR7)).